The chain runs to 216 residues: Movement and silencing protein TGBp1 (216 aa).

One can recognise a (+)RNA virus helicase ATP-binding domain in the interval 1 to 110; sequence MEFCGGTLRT…GEVRPAHFTC (110 aa). In terms of domain architecture, (+)RNA virus helicase C-terminal spans 111–216; that stretch reads SHTHRFGKST…RHTDSLLILN (106 aa).

The protein belongs to the Tymovirales TGBp1 protein family. Homodimer and homooligomer. Interacts with capsid protein. Interacts with host AGO1; this interaction targets the host protein for degradation, thereby suppressing the antiviral RNA silencing.

Its subcellular location is the host cytoplasm. In terms of biological role, transports viral genome to neighboring plant cells directly through plasmosdesmata, without any budding. The movement protein allows efficient cell to cell propagation, by bypassing the host cell wall barrier. Increases plasmodesma size exclusion limit. Acts as a suppressor of RNA-mediated gene silencing, also known as post-transcriptional gene silencing (PTGS), a mechanism of plant viral defense that limits the accumulation of viral RNAs. The chain is Movement and silencing protein TGBp1 from Lilium formosanum.